The primary structure comprises 281 residues: Ribosomal protein L11 methyltransferase (281 aa).

Positions 133, 154, 175, and 216 each coordinate S-adenosyl-L-methionine.

The protein belongs to the methyltransferase superfamily. PrmA family.

The protein localises to the cytoplasm. It carries out the reaction L-lysyl-[protein] + 3 S-adenosyl-L-methionine = N(6),N(6),N(6)-trimethyl-L-lysyl-[protein] + 3 S-adenosyl-L-homocysteine + 3 H(+). Methylates ribosomal protein L11. The sequence is that of Ribosomal protein L11 methyltransferase from Campylobacter jejuni subsp. jejuni serotype O:6 (strain 81116 / NCTC 11828).